We begin with the raw amino-acid sequence, 406 residues long: MAAARGAWCVPCLASIETLQELCRKEMLICTNIGITRKNLNNYEVEYLCDYRIEKGVEKFFVKWKGWPESCNTWEPTRNLKCPTLLKQFYSDLYNYFCALKPNKKGFLKNSIKSLDPSLSDYIVKKAKQRIALRRWEEELNRKKTHSGTLFVENTVDLEGPPMDFYYINDYKASPGVNTLGEAIVGCDCSDCFKGKCCPTEAGVLFAYNEHRQIKIPPGRPIYECNSRCKCGPDCPNRVVQKGPPYSLCIFRTDNGRGWGVKTLQKIKKNSFVMEYVGEVITSEEAERRGQQYDSRGITYLFDLDYEADEFTVDAARYGNVSHFVNHSCDPNLQVFNVFIDNLDVRLPRIALFSTRNIKAGEELTFDYQMKGSGDFSTDSIDMSPAKKRVRIACKCGAATCRGYLN.

A Chromo domain is found at 43–101 (YEVEYLCDYRIEKGVEKFFVKWKGWPESCNTWEPTRNLKCPTLLKQFYSDLYNYFCALK). The Pre-SET domain maps to 185–243 (VGCDCSDCFKGKCCPTEAGVLFAYNEHRQIKIPPGRPIYECNSRCKCGPDCPNRVVQKG). Residues C187, C189, C192, C197, C198, C225, C229, C231, and C235 each contribute to the Zn(2+) site. The SET domain maps to 246-369 (YSLCIFRTDN…AGEELTFDYQ (124 aa)). S-adenosyl-L-methionine-binding positions include 257 to 259 (RGW), Y300, and 326 to 327 (NH). Residues C329, C394, C396, and C401 each contribute to the Zn(2+) site. The Post-SET domain occupies 390-406 (VRIACKCGAATCRGYLN).

The protein belongs to the class V-like SAM-binding methyltransferase superfamily. Histone-lysine methyltransferase family. Suvar3-9 subfamily.

It localises to the nucleus. It is found in the chromosome. The protein resides in the centromere. The enzyme catalyses L-lysyl(9)-[histone H3] + 3 S-adenosyl-L-methionine = N(6),N(6),N(6)-trimethyl-L-lysyl(9)-[histone H3] + 3 S-adenosyl-L-homocysteine + 3 H(+). Histone methyltransferase that specifically trimethylates 'Lys-9' of histone H3 using monomethylated H3 'Lys-9' as substrate. H3 'Lys-9' trimethylation represents a specific tag for epigenetic transcriptional repression by recruiting HP1 (CBX1, CBX3 and/or CBX5) proteins to methylated histones. Mainly functions in heterochromatin regions, thereby playing a central role in the establishment of constitutive heterochromatin at pericentric and telomere regions. H3 'Lys-9' trimethylation is also required to direct DNA methylation at pericentric repeats. SUV39H1 is targeted to histone H3 via its interaction with RB1 and is involved in many processes. The chain is Histone-lysine N-methyltransferase SUV39H2 (suv39h2) from Xenopus tropicalis (Western clawed frog).